Here is a 187-residue protein sequence, read N- to C-terminus: Elongation factor P (187 aa).

It belongs to the elongation factor P family.

The protein resides in the cytoplasm. It functions in the pathway protein biosynthesis; polypeptide chain elongation. Involved in peptide bond synthesis. Stimulates efficient translation and peptide-bond synthesis on native or reconstituted 70S ribosomes in vitro. Probably functions indirectly by altering the affinity of the ribosome for aminoacyl-tRNA, thus increasing their reactivity as acceptors for peptidyl transferase. This is Elongation factor P from Mycobacterium leprae (strain Br4923).